A 252-amino-acid polypeptide reads, in one-letter code: 5'-nucleotidase SurE (252 aa).

A divalent metal cation contacts are provided by aspartate 8, aspartate 9, serine 39, and asparagine 95.

This sequence belongs to the SurE nucleotidase family. Requires a divalent metal cation as cofactor.

The protein localises to the cytoplasm. It catalyses the reaction a ribonucleoside 5'-phosphate + H2O = a ribonucleoside + phosphate. In terms of biological role, nucleotidase that shows phosphatase activity on nucleoside 5'-monophosphates. This Clostridium botulinum (strain ATCC 19397 / Type A) protein is 5'-nucleotidase SurE.